A 244-amino-acid chain; its full sequence is Sperm-egg fusion protein Juno (244 aa).

A signal peptide spans 1 to 19; it reads MAQWWLILLGLWTVLPSLA. Intrachain disulfides connect Cys-27–Cys-55, Cys-47–Cys-95, Cys-56–Cys-99, Cys-79–Cys-166, Cys-86–Cys-137, Cys-126–Cys-200, Cys-130–Cys-180, and Cys-143–Cys-160. The segment at 62 to 81 is important for interaction with IZUMO1; the sequence is WEAHLDEPLLFNFSMTHCGL. Residue Asn-73 is glycosylated (N-linked (GlcNAc...) asparagine). Residues 223 to 244 constitute a propeptide that is removed on maturation; that stretch reads SASAPQLSYSITAFSLCLLLHA.

The protein belongs to the folate receptor family. Monomer. Interacts with IZUMO1; the interaction is direct. IZUMO1 and IZUMO1R/JUNO form a complex with 1:1 stoichiometry. Interacts with FCRL3/MAIA; FCRL3/MAIA replaces IZUMO1R/JUNO as IZUMO1 receptor after sperm-egg adhesion, thereby permitting species-specific gamete fusion. Interacts with WDR54. The protein is rapidly cleaved following fertilization, being only weakly detectable in zona-intact fertilized eggs at telophase II and undetectable at the pronuclear stage. Sheding is probably required to block to polyspermy and ensuring egg fusion with a single sperm. In terms of tissue distribution, expressed in the oocyte (at protein level).

It localises to the cell membrane. Its subcellular location is the cell projection. The protein localises to the microvillus membrane. In terms of biological role, receptor for IZUMO1 present at the cell surface of oocytes (oolemma), which is essential for species-specific gamete recognition and fertilization. The IZUMO1:IZUMO1R/JUNO interaction is a necessary adhesion event between sperm and egg that is required for fertilization but is not sufficient for cell fusion. The ligand-receptor interaction probably does not act as a membrane 'fusogen'. Does not bind folate. This Rattus norvegicus (Rat) protein is Sperm-egg fusion protein Juno (Izumo1r).